The primary structure comprises 415 residues: Dynein assembly factor with WD repeat domains 1 (415 aa).

WD repeat units follow at residues alanine 90–threonine 129, glycine 132–arginine 174, glycine 175–threonine 214, glycine 217–isoleucine 256, glycine 259–threonine 298, glycine 301–lysine 340, glycine 343–glutamate 384, and histidine 386–arginine 415.

It belongs to the WD repeat WDR69 family. In terms of assembly, interacts with IFT46.

Its subcellular location is the cytoplasm. The protein resides in the cytoskeleton. It localises to the flagellum basal body. It is found in the flagellum axoneme. Functionally, required for axonemal dynein assembly and ciliary motility in ciliated organs, including Kupffer's vesicle, during embryogenesis. Facilitates the onset of robust cilia motility during development. This chain is Dynein assembly factor with WD repeat domains 1 (DAW1), found in Macaca fascicularis (Crab-eating macaque).